We begin with the raw amino-acid sequence, 383 residues long: ATP phosphoribosyltransferase regulatory subunit (383 aa).

It belongs to the class-II aminoacyl-tRNA synthetase family. HisZ subfamily. Heteromultimer composed of HisG and HisZ subunits.

The protein resides in the cytoplasm. It functions in the pathway amino-acid biosynthesis; L-histidine biosynthesis; L-histidine from 5-phospho-alpha-D-ribose 1-diphosphate: step 1/9. Its function is as follows. Required for the first step of histidine biosynthesis. May allow the feedback regulation of ATP phosphoribosyltransferase activity by histidine. The chain is ATP phosphoribosyltransferase regulatory subunit from Paraburkholderia phymatum (strain DSM 17167 / CIP 108236 / LMG 21445 / STM815) (Burkholderia phymatum).